Reading from the N-terminus, the 210-residue chain is Outer-membrane lipoprotein carrier protein (210 aa).

Residues 1-23 form the signal peptide; sequence MLMFSRFRYIFFAVALLSGPVCA.

It belongs to the LolA family. As to quaternary structure, monomer.

The protein resides in the periplasm. In terms of biological role, participates in the translocation of lipoproteins from the inner membrane to the outer membrane. Only forms a complex with a lipoprotein if the residue after the N-terminal Cys is not an aspartate (The Asp acts as a targeting signal to indicate that the lipoprotein should stay in the inner membrane). The polypeptide is Outer-membrane lipoprotein carrier protein (Xylella fastidiosa (strain Temecula1 / ATCC 700964)).